A 637-amino-acid chain; its full sequence is 3D-(3,5/4)-trihydroxycyclohexane-1,2-dione hydrolase (637 aa).

Residue glutamate 66 coordinates thiamine diphosphate. A thiamine pyrophosphate binding region spans residues 442–522 (SLPGDLQRLW…INVLLFDNSG (81 aa)). Mg(2+)-binding residues include aspartate 493 and asparagine 520.

It belongs to the TPP enzyme family. Requires Mg(2+) as cofactor. It depends on thiamine diphosphate as a cofactor.

The enzyme catalyses 3D-3,5/4-trihydroxycyclohexane-1,2-dione + H2O = 5-deoxy-D-glucuronate + H(+). The protein operates within polyol metabolism; myo-inositol degradation into acetyl-CoA; acetyl-CoA from myo-inositol: step 3/7. Involved in the cleavage of the C1-C2 bond of 3D-(3,5/4)-trihydroxycyclohexane-1,2-dione (THcHDO) to yield 5-deoxy-glucuronate (5DG). The sequence is that of 3D-(3,5/4)-trihydroxycyclohexane-1,2-dione hydrolase from Bacillus velezensis (strain DSM 23117 / BGSC 10A6 / LMG 26770 / FZB42) (Bacillus amyloliquefaciens subsp. plantarum).